The following is a 379-amino-acid chain: Fructose-1,6-bisphosphate aldolase/phosphatase (379 aa).

The active-site Proton acceptor; for FBP phosphatase activity is the Asp13. Mg(2+) is bound by residues Asp13, His20, Asp51, and Asp52. His20 provides a ligand contact to beta-D-fructose 1,6-bisphosphate. Residue His20 coordinates dihydroxyacetone phosphate. Residue Tyr89 coordinates beta-D-fructose 1,6-bisphosphate. A Mg(2+)-binding site is contributed by Gln93. 102 to 103 (GN) is a beta-D-fructose 1,6-bisphosphate binding site. A Mg(2+)-binding site is contributed by Asp130. Residue Lys131 coordinates beta-D-fructose 1,6-bisphosphate. Residue Lys131 coordinates dihydroxyacetone phosphate. Catalysis depends on Tyr227, which acts as the Proton donor/acceptor; for FBP aldolase activity. Residues Lys230, Asp231, and Asp232 each contribute to the Mg(2+) site. The active-site Schiff-base intermediate with DHAP; for FBP aldolase activity is Lys230. Beta-D-fructose 1,6-bisphosphate is bound by residues 240 to 241 (QS), Arg264, Asp285, and Tyr346. Residues Arg264 and Asp285 each contribute to the dihydroxyacetone phosphate site.

The protein belongs to the FBP aldolase/phosphatase family. In terms of assembly, homooctamer; dimer of tetramers. Mg(2+) is required as a cofactor.

It carries out the reaction beta-D-fructose 1,6-bisphosphate + H2O = beta-D-fructose 6-phosphate + phosphate. The enzyme catalyses beta-D-fructose 1,6-bisphosphate = D-glyceraldehyde 3-phosphate + dihydroxyacetone phosphate. It participates in carbohydrate biosynthesis; gluconeogenesis. Its function is as follows. Catalyzes two subsequent steps in gluconeogenesis: the aldol condensation of dihydroxyacetone phosphate (DHAP) and glyceraldehyde-3-phosphate (GA3P) to fructose-1,6-bisphosphate (FBP), and the dephosphorylation of FBP to fructose-6-phosphate (F6P). The sequence is that of Fructose-1,6-bisphosphate aldolase/phosphatase from Moorella thermoacetica (strain ATCC 39073 / JCM 9320).